The following is a 205-amino-acid chain: ATP-dependent Clp protease proteolytic subunit (205 aa).

Residue S107 is the Nucleophile of the active site. The active site involves H132.

The protein belongs to the peptidase S14 family. In terms of assembly, fourteen ClpP subunits assemble into 2 heptameric rings which stack back to back to give a disk-like structure with a central cavity, resembling the structure of eukaryotic proteasomes.

It is found in the cytoplasm. It catalyses the reaction Hydrolysis of proteins to small peptides in the presence of ATP and magnesium. alpha-casein is the usual test substrate. In the absence of ATP, only oligopeptides shorter than five residues are hydrolyzed (such as succinyl-Leu-Tyr-|-NHMec, and Leu-Tyr-Leu-|-Tyr-Trp, in which cleavage of the -Tyr-|-Leu- and -Tyr-|-Trp bonds also occurs).. Functionally, cleaves peptides in various proteins in a process that requires ATP hydrolysis. Has a chymotrypsin-like activity. Plays a major role in the degradation of misfolded proteins. This is ATP-dependent Clp protease proteolytic subunit from Pseudoalteromonas translucida (strain TAC 125).